Here is a 286-residue protein sequence, read N- to C-terminus: Nucleoid occlusion protein (286 aa).

Residues 147–166 (EALAQRLGKNQSTVANKLRL) constitute a DNA-binding region (H-T-H motif).

This sequence belongs to the ParB family.

The protein resides in the cytoplasm. Its subcellular location is the nucleoid. Effects nucleoid occlusion by binding relatively nonspecifically to DNA and preventing the assembly of the division machinery in the vicinity of the nucleoid, especially under conditions that disturb the cell cycle. It helps to coordinate cell division and chromosome segregation by preventing the formation of the Z ring through the nucleoid, which would cause chromosome breakage. The polypeptide is Nucleoid occlusion protein (Oceanobacillus iheyensis (strain DSM 14371 / CIP 107618 / JCM 11309 / KCTC 3954 / HTE831)).